The chain runs to 484 residues: MLIFELSKTGRQAKAQIPRAVGKNYSIPEEFQRKSPPRLPACSELQVVRHFTCLSQKNFSIDTNFYPLGSCTMKYNPRGVHKAASLPGFINRHPLAMDNESQGFLETLYKLQNYISEITGMPGVSLTPMAGSQGEFAGVAMIKAYHQSRGDTARDEILIPDAAHGTNPASAVMCGFKVVEIATAPDGDIDLDELKRKVGPRTAGIMLTNPSTLGLFMRQIKEIASLVHQAGGLLYYDGANLNAILGKVRPGDMGFDVMHLNLHKTFATPHGGGGPGAGPVAVGKRLIPYMPLPVVKKTDSGYHWATRQDYPQSIGRLSCFMGNAGILLRAYFYMLVLGKEGLLRVSEFATLNANYLLKELTKVGYTAAYPDRRASHEFILTLNSEKKNYDVTAMDFAKRLLDYGVHAPTTYFPLLVPECLLIEPPETESKEELDAFVAVMKTIREEASKQPDILKTAPHTLPVKRLDDVKAARELDLNYFATHE.

Lysine 264 bears the N6-(pyridoxal phosphate)lysine mark.

The protein belongs to the GcvP family. C-terminal subunit subfamily. As to quaternary structure, the glycine cleavage system is composed of four proteins: P, T, L and H. In this organism, the P 'protein' is a heterodimer of two subunits. Requires pyridoxal 5'-phosphate as cofactor.

The enzyme catalyses N(6)-[(R)-lipoyl]-L-lysyl-[glycine-cleavage complex H protein] + glycine + H(+) = N(6)-[(R)-S(8)-aminomethyldihydrolipoyl]-L-lysyl-[glycine-cleavage complex H protein] + CO2. In terms of biological role, the glycine cleavage system catalyzes the degradation of glycine. The P protein binds the alpha-amino group of glycine through its pyridoxal phosphate cofactor; CO(2) is released and the remaining methylamine moiety is then transferred to the lipoamide cofactor of the H protein. In Legionella pneumophila (strain Corby), this protein is Probable glycine dehydrogenase (decarboxylating) subunit 2.